The chain runs to 790 residues: Lon protease (790 aa).

A Lon N-terminal domain is found at Leu-13–Ile-209. Residue Gly-362 to Thr-369 participates in ATP binding. Residues Asp-598–Thr-779 form the Lon proteolytic domain. Catalysis depends on residues Ser-685 and Lys-728.

Belongs to the peptidase S16 family. As to quaternary structure, homohexamer. Organized in a ring with a central cavity.

Its subcellular location is the cytoplasm. It catalyses the reaction Hydrolysis of proteins in presence of ATP.. Its function is as follows. ATP-dependent serine protease that mediates the selective degradation of mutant and abnormal proteins as well as certain short-lived regulatory proteins. Required for cellular homeostasis and for survival from DNA damage and developmental changes induced by stress. Degrades polypeptides processively to yield small peptide fragments that are 5 to 10 amino acids long. Binds to DNA in a double-stranded, site-specific manner. This is Lon protease from Orientia tsutsugamushi (strain Ikeda) (Rickettsia tsutsugamushi).